Reading from the N-terminus, the 146-residue chain is General odorant-binding protein 19a (146 aa).

The first 22 residues, 1–22 (MKFHLLLVCVAISLGPIPQSEA), serve as a signal peptide directing secretion. Disulfide bonds link C40-C72, C68-C126, and C113-C135.

It belongs to the PBP/GOBP family. As to expression, expressed in adult olfactory system. Expressed exclusively in a subset of chemosensory sensilla on the third antennal segment.

It is found in the secreted. Functionally, present in the aqueous fluid surrounding olfactory sensory dendrites and are thought to aid in the capture and transport of hydrophobic odorants into and through this fluid. This is General odorant-binding protein 19a (Obp19a) from Drosophila melanogaster (Fruit fly).